The sequence spans 439 residues: Histidine--tRNA ligase (439 aa).

This sequence belongs to the class-II aminoacyl-tRNA synthetase family. As to quaternary structure, homodimer.

The protein resides in the cytoplasm. The enzyme catalyses tRNA(His) + L-histidine + ATP = L-histidyl-tRNA(His) + AMP + diphosphate + H(+). The protein is Histidine--tRNA ligase (hisS) of Leptospira interrogans serogroup Icterohaemorrhagiae serovar Lai (strain 56601).